A 122-amino-acid polypeptide reads, in one-letter code: Ribosome-binding factor A (122 aa).

The span at 95–111 (PTVERVTRIQRTLREVS) shows a compositional bias: basic and acidic residues. Residues 95 to 122 (PTVERVTRIQRTLREVSGEDGDGNGTQE) form a disordered region.

The protein belongs to the RbfA family. In terms of assembly, monomer. Binds 30S ribosomal subunits, but not 50S ribosomal subunits or 70S ribosomes.

It localises to the cytoplasm. One of several proteins that assist in the late maturation steps of the functional core of the 30S ribosomal subunit. Associates with free 30S ribosomal subunits (but not with 30S subunits that are part of 70S ribosomes or polysomes). Required for efficient processing of 16S rRNA. May interact with the 5'-terminal helix region of 16S rRNA. The chain is Ribosome-binding factor A from Rubrobacter xylanophilus (strain DSM 9941 / JCM 11954 / NBRC 16129 / PRD-1).